The primary structure comprises 201 residues: Peptidyl-tRNA hydrolase (201 aa).

Tyr14 is a tRNA binding site. The Proton acceptor role is filled by His19. Residues Tyr64, Asn66, and Asn112 each contribute to the tRNA site.

Belongs to the PTH family. As to quaternary structure, monomer.

The protein localises to the cytoplasm. It catalyses the reaction an N-acyl-L-alpha-aminoacyl-tRNA + H2O = an N-acyl-L-amino acid + a tRNA + H(+). Hydrolyzes ribosome-free peptidyl-tRNAs (with 1 or more amino acids incorporated), which drop off the ribosome during protein synthesis, or as a result of ribosome stalling. In terms of biological role, catalyzes the release of premature peptidyl moieties from peptidyl-tRNA molecules trapped in stalled 50S ribosomal subunits, and thus maintains levels of free tRNAs and 50S ribosomes. The protein is Peptidyl-tRNA hydrolase of Afipia carboxidovorans (strain ATCC 49405 / DSM 1227 / KCTC 32145 / OM5) (Oligotropha carboxidovorans).